We begin with the raw amino-acid sequence, 455 residues long: Oxysterols receptor LXR-beta (455 aa).

Over residues 1–10 (MSTPTTNSVD) the composition is skewed to polar residues. The disordered stretch occupies residues 1-53 (MSTPTTNSVDTPLPGNGPSTPSSSPGGKEDGPEPCPGGADPDVPSTDGADSAS). Positions 1–80 (MSTPTTNSVD…GPAPKMLGDE (80 aa)) are transactivation AF-1; required for ligand-independent transactivation function. The segment covering 14-26 (PGNGPSTPSSSPG) has biased composition (low complexity). Residues 79–156 (DELCQVCGDT…AGMREQCVLS (78 aa)) constitute a DNA-binding region (nuclear receptor). NR C4-type zinc fingers lie at residues 82–102 (CQVCGDTASGFHYNVLSCEGC) and 120–144 (CRGGGTCQMDAFMRRKCQQCRLRKC). Residues 164-210 (KIRKQQQQQQQQSSPTGPGVSSSSPASGPGASPGGSDGGGQGSGEGE) are disordered. Over residues 168-193 (QQQQQQQQSSPTGPGVSSSSPASGPG) the composition is skewed to low complexity. Residues 194–210 (ASPGGSDGGGQGSGEGE) are compositionally biased toward gly residues. The segment at 214 to 455 (LTAAQELMIQ…LLSEIWDVHE (242 aa)) is transactivation AF-2; required for ligand-dependent transactivation function; mediates interaction with CCAR2. Positions 217–455 (AQELMIQQLV…LLSEIWDVHE (239 aa)) constitute an NR LBD domain. Glycyl lysine isopeptide (Lys-Gly) (interchain with G-Cter in SUMO2) cross-links involve residues Lys404 and Lys442.

The protein belongs to the nuclear hormone receptor family. NR1 subfamily. In terms of assembly, forms a heterodimer with RXR. Interacts with CCAR2 (via N-terminus) in a ligand-independent manner. Interacts (when sumoylated) with GPS2; interaction with GPS2 onto hepatic acute phase protein promoters prevents N-Cor corepressor complex dissociation. Interacts with ABCA12 and ABCA1; this interaction is required for ABCA1 localization to the cell surface and is necessary for its normal activity and stability. In terms of processing, sumoylated by SUMO2 at Lys-404 and Lys-442 during the hepatic acute phase response, leading to promote interaction with GPS2 and prevent N-Cor corepressor complex dissociation.

It is found in the nucleus. In terms of biological role, nuclear receptor that exhibits a ligand-dependent transcriptional activation activity. Binds preferentially to double-stranded oligonucleotide direct repeats having the consensus half-site sequence 5'-AGGTCA-3' and 4-nt spacing (DR-4). Regulates cholesterol uptake through MYLIP-dependent ubiquitination of LDLR, VLDLR and LRP8; DLDLR and LRP8. Interplays functionally with RORA for the regulation of genes involved in liver metabolism. Induces LPCAT3-dependent phospholipid remodeling in endoplasmic reticulum (ER) membranes of hepatocytes, driving SREBF1 processing and lipogenesis. Via LPCAT3, triggers the incorporation of arachidonate into phosphatidylcholines of ER membranes, increasing membrane dynamics and enabling triacylglycerols transfer to nascent very low-density lipoprotein (VLDL) particles. Via LPCAT3 also counteracts lipid-induced ER stress response and inflammation, likely by modulating SRC kinase membrane compartmentalization and limiting the synthesis of lipid inflammatory mediators. Plays an anti-inflammatory role during the hepatic acute phase response by acting as a corepressor: inhibits the hepatic acute phase response by preventing dissociation of the N-Cor corepressor complex. The chain is Oxysterols receptor LXR-beta (NR1H2) from Bos taurus (Bovine).